Reading from the N-terminus, the 126-residue chain is Fluoride-specific ion channel FluC (126 aa).

4 helical membrane-spanning segments follow: residues 4 to 24, 33 to 53, 67 to 87, and 97 to 117; these read PLLS…LLGL, IPLG…FAMA, FVIT…IEIV, and MAML…CLGL. Na(+)-binding residues include Gly74 and Thr77.

This sequence belongs to the fluoride channel Fluc/FEX (TC 1.A.43) family.

It is found in the cell inner membrane. The catalysed reaction is fluoride(in) = fluoride(out). With respect to regulation, na(+) is not transported, but it plays an essential structural role and its presence is essential for fluoride channel function. Its function is as follows. Fluoride-specific ion channel. Important for reducing fluoride concentration in the cell, thus reducing its toxicity. In Acinetobacter baumannii (strain ACICU), this protein is Fluoride-specific ion channel FluC.